Here is a 1097-residue protein sequence, read N- to C-terminus: DNA-directed RNA polymerase subunit beta (1097 aa).

Residues 1070 to 1097 (LMQDVNPRRNTPSRPTYESLGTSEYEED) form a disordered region. The span at 1077 to 1091 (RRNTPSRPTYESLGT) shows a compositional bias: polar residues.

Belongs to the RNA polymerase beta chain family. In cyanobacteria the RNAP catalytic core is composed of 2 alpha, 1 beta, 1 beta', 1 gamma and 1 omega subunit. When a sigma factor is associated with the core the holoenzyme is formed, which can initiate transcription.

It catalyses the reaction RNA(n) + a ribonucleoside 5'-triphosphate = RNA(n+1) + diphosphate. In terms of biological role, DNA-dependent RNA polymerase catalyzes the transcription of DNA into RNA using the four ribonucleoside triphosphates as substrates. In Prochlorococcus marinus (strain MIT 9515), this protein is DNA-directed RNA polymerase subunit beta.